Reading from the N-terminus, the 191-residue chain is UPF0312 protein Sbal195_3198 (191 aa).

Positions 1–22 are cleaved as a signal peptide; the sequence is MKKQLFSALIGASLLAPMAASA.

This sequence belongs to the UPF0312 family. Type 1 subfamily.

It is found in the periplasm. In Shewanella baltica (strain OS195), this protein is UPF0312 protein Sbal195_3198.